The following is a 2432-amino-acid chain: uncharacterized protein (2432 aa).

It belongs to the IIV-6 261R/396L/443R family.

This is an uncharacterized protein from Invertebrate iridescent virus 6 (IIV-6).